A 91-amino-acid polypeptide reads, in one-letter code: UPF0250 protein PSPTO_4820 (91 aa).

It belongs to the UPF0250 family.

The polypeptide is UPF0250 protein PSPTO_4820 (Pseudomonas syringae pv. tomato (strain ATCC BAA-871 / DC3000)).